The sequence spans 429 residues: Carboxypeptidase B (429 aa).

An N-terminal signal peptide occupies residues 1–15 (MKFLLVLALCAVVYA). The 303-residue stretch at 121–423 (NYQELEVIDE…EGIVVGARRA (303 aa)) folds into the Peptidase M14 domain. Zn(2+)-binding residues include histidine 182 and glutamate 185. Substrate contacts are provided by residues 182 to 185 (HARE), arginine 236, and 256 to 257 (NR). Cysteine 250 and cysteine 273 are oxidised to a cystine. Histidine 309 serves as a coordination point for Zn(2+). Substrate contacts are provided by residues 310–311 (SF) and tyrosine 365. The Proton donor/acceptor role is filled by glutamate 387.

This sequence belongs to the peptidase M14 family. Zn(2+) is required as a cofactor.

It localises to the secreted. The catalysed reaction is Preferential release of a C-terminal lysine or arginine amino acid.. With respect to regulation, highly resistant to inhibition by potato carboxypeptidase inhibitor (PCI). Moderately inhibited by leech carboxypeptidase inhibitor (LCI) and tick carboxypeptidase inhibitor (TCI). Metalloprotease which cleaves a single amino acid from the C-terminal end of polypeptide chains. Shows a strong preference for peptides with a terminal lysine residue. The sequence is that of Carboxypeptidase B from Helicoverpa zea (Corn earworm moth).